The primary structure comprises 467 residues: Putative vacuolar protein sorting-associated protein TDA6 (467 aa).

Residues 8 to 28 (ILLWFLIVDLSVIRALVLPPL) traverse the membrane as a helical segment. Asparagine 61, asparagine 124, and asparagine 141 each carry an N-linked (GlcNAc...) asparagine glycan.

This sequence belongs to the VPS62 family.

It is found in the membrane. Involved in vacuolar protein sorting. The chain is Putative vacuolar protein sorting-associated protein TDA6 (TDA6) from Saccharomyces cerevisiae (strain ATCC 204508 / S288c) (Baker's yeast).